A 291-amino-acid polypeptide reads, in one-letter code: uncharacterized protein (291 aa).

In terms of domain architecture, DAGKc spans 68–205 (PVAVSASFLW…VIQLWARPRG (138 aa)).

This is an uncharacterized protein from Mycobacterium tuberculosis (strain CDC 1551 / Oshkosh).